Here is a 131-residue protein sequence, read N- to C-terminus: Large ribosomal subunit protein bL17 (131 aa).

It belongs to the bacterial ribosomal protein bL17 family. In terms of assembly, part of the 50S ribosomal subunit. Contacts protein L32.

The polypeptide is Large ribosomal subunit protein bL17 (Shewanella sp. (strain ANA-3)).